Reading from the N-terminus, the 404-residue chain is Glycerol-1-phosphate dehydrogenase [NAD(P)+] (404 aa).

NAD(+)-binding positions include aspartate 56, 118 to 122, and 140 to 143; these read GTIHD and TAPS. Aspartate 145 serves as a coordination point for substrate. Serine 149 is a binding site for NAD(+). Substrate is bound at residue aspartate 192. 2 residues coordinate Ni(2+): aspartate 192 and histidine 272. A substrate-binding site is contributed by histidine 276. A Ni(2+)-binding site is contributed by histidine 292.

It belongs to the glycerol-1-phosphate dehydrogenase family. Homodimer. Ni(2+) serves as cofactor.

The protein resides in the cytoplasm. The enzyme catalyses sn-glycerol 1-phosphate + NAD(+) = dihydroxyacetone phosphate + NADH + H(+). It carries out the reaction sn-glycerol 1-phosphate + NADP(+) = dihydroxyacetone phosphate + NADPH + H(+). In terms of biological role, catalyzes the NAD(P)H-dependent reduction of dihydroxyacetonephosphate (DHAP or glycerone phosphate) to glycerol 1-phosphate (G1P). The G1P thus generated is probably used for the synthesis of phosphoglycerolipids in Gram-positive bacterial species. This Geobacillus stearothermophilus (Bacillus stearothermophilus) protein is Glycerol-1-phosphate dehydrogenase [NAD(P)+].